The primary structure comprises 155 residues: Small ribosomal subunit protein uS7cz/uS7cy (155 aa).

This sequence belongs to the universal ribosomal protein uS7 family. In terms of assembly, part of the 30S ribosomal subunit.

The protein localises to the plastid. It localises to the chloroplast. Functionally, one of the primary rRNA binding proteins, it binds directly to 16S rRNA where it nucleates assembly of the head domain of the 30S subunit. This chain is Small ribosomal subunit protein uS7cz/uS7cy (rps7-A), found in Nymphaea alba (White water-lily).